Consider the following 236-residue polypeptide: Small ribosomal subunit protein uS2c (236 aa).

The protein belongs to the universal ribosomal protein uS2 family.

The protein localises to the plastid. It localises to the chloroplast. The chain is Small ribosomal subunit protein uS2c (rps2) from Olimarabidopsis pumila (Dwarf rocket).